The sequence spans 226 residues: ATP-dependent dethiobiotin synthetase BioD (226 aa).

14–19 (GIGKTF) serves as a coordination point for ATP. Residue Thr18 coordinates Mg(2+). Lys39 is an active-site residue. Residue Ser43 participates in substrate binding. ATP is bound by residues Asp56, 117–120 (EGVG), 177–178 (NT), 206–208 (PHI), and Asn213. Positions 56 and 117 each coordinate Mg(2+).

Belongs to the dethiobiotin synthetase family. Homodimer. The cofactor is Mg(2+).

The protein localises to the cytoplasm. The catalysed reaction is (7R,8S)-7,8-diammoniononanoate + CO2 + ATP = (4R,5S)-dethiobiotin + ADP + phosphate + 3 H(+). The protein operates within cofactor biosynthesis; biotin biosynthesis; biotin from 7,8-diaminononanoate: step 1/2. In terms of biological role, catalyzes a mechanistically unusual reaction, the ATP-dependent insertion of CO2 between the N7 and N8 nitrogen atoms of 7,8-diaminopelargonic acid (DAPA, also called 7,8-diammoniononanoate) to form a ureido ring. This Xylella fastidiosa (strain 9a5c) protein is ATP-dependent dethiobiotin synthetase BioD.